Consider the following 1330-residue polypeptide: ESX-3 secretion system protein EccC3 (1330 aa).

Transmembrane regions (helical) follow at residues 43 to 63 (LPYL…ATGM) and 65 to 85 (VISP…TALY). 3 consecutive FtsK domains span residues 456–662 (GEPL…SVSR), 811–1000 (RDPL…RDSN), and 1090–1280 (LAPV…ADSG). Residues 479-486 (GMTGSGKS), 829-836 (GGPKSGKS), and 1107-1114 (GDARSGKT) each bind ATP.

As to quaternary structure, part of the ESX-3 / type VII secretion system (T7SS), which is composed of cytosolic and membrane components. The ESX-3 membrane complex is composed of EccB3, EccC3, EccD3 and EccE3.

It localises to the cell inner membrane. Part of the ESX-3 specialized secretion system, which is important for iron and zinc uptake or homeostasis. In Mycobacterium tuberculosis (strain CDC 1551 / Oshkosh), this protein is ESX-3 secretion system protein EccC3.